We begin with the raw amino-acid sequence, 775 residues long: Mitochondrial 15S rRNA processing factor CCM1 (775 aa).

The transit peptide at 1–18 directs the protein to the mitochondrion; it reads MLRYARTVRFSQVGNSVR. The segment at 35–65 is disordered; that stretch reads HDRKSPSHSLSPISNLPNHNDSSTERARKTL. Residues 41-55 show a composition bias toward polar residues; the sequence is SHSLSPISNLPNHND. The span at 56–65 shows a compositional bias: basic and acidic residues; sequence SSTERARKTL. PPR repeat units lie at residues 289–323, 324–355, 362–396, 397–432, and 433–467; these read PKRT…KIEI, SGMA…MRFQ, GTRA…KIEP, NQQI…NWTP, and TLPT…NTVS.

It belongs to the CCM1 family. Binds to mitochondrial small subunit 15S rRNA.

It is found in the mitochondrion. Regulates mitochondrial small subunit maturation by controlling 15S rRNA 5'-end processing. Localizes to the 5' precursor of the 15S rRNA in a position that is subsequently occupied by mS47 in the mature yeast mtSSU. Uses structure and sequence-specific RNA recognition, binding to a single-stranded region of the precursor and specifically recognizing bases -6 to -1. The exchange of Ccm1 for mS47 is coupled to the irreversible removal of precursor rRNA that is accompanied by conformational changes of the mitoribosomal proteins uS5m and mS26. These conformational changes signal completion of 5'-end rRNA processing through protection of the mature 5'-end of the 15S rRNA and stabilization of mS47. The removal of the 5' precursor together with the dissociation of Ccm1 may be catalyzed by the 5'-3' exoribonuclease Pet127. Involved in the specific removal of group I introns in mitochondrial encoded transcripts. The sequence is that of Mitochondrial 15S rRNA processing factor CCM1 (CCM1) from Scheffersomyces stipitis (strain ATCC 58785 / CBS 6054 / NBRC 10063 / NRRL Y-11545) (Yeast).